The primary structure comprises 581 residues: Tricyclene synthase Oc15, chloroplastic (581 aa).

Residues 1-68 (MAFCISYVGA…ALCLNEHSLS (68 aa)) constitute a chloroplast transit peptide. N-linked (GlcNAc...) asparagine glycans are attached at residues asparagine 27, asparagine 206, and asparagine 319. Residues aspartate 338 and aspartate 342 each contribute to the Mg(2+) site. The DDXXD motif motif lies at 338-342 (DDIFD). 2 N-linked (GlcNAc...) asparagine glycosylation sites follow: asparagine 384 and asparagine 465. Residues asparagine 482, serine 486, and glutamate 490 each coordinate Mg(2+). Asparagine 509 carries N-linked (GlcNAc...) asparagine glycosylation.

It belongs to the terpene synthase family. Tpsg subfamily. Requires Mg(2+) as cofactor. Mn(2+) serves as cofactor. In terms of tissue distribution, accumulates in flowers; mostly expressed in both upper and lower petal lobes, and, to a lower extent, in tube and stamens.

It is found in the plastid. The protein resides in the chloroplast stroma. It catalyses the reaction (2E)-geranyl diphosphate = tricyclene + diphosphate. The enzyme catalyses (2E)-geranyl diphosphate = beta-myrcene + diphosphate. The protein operates within secondary metabolite biosynthesis; terpenoid biosynthesis. Functionally, contributes to floral scent emission. The protein is Tricyclene synthase Oc15, chloroplastic (Oc15) of Antirrhinum majus (Garden snapdragon).